A 189-amino-acid polypeptide reads, in one-letter code: Large ribosomal subunit protein eL19A (189 aa).

Residue K21 forms a Glycyl lysine isopeptide (Lys-Gly) (interchain with G-Cter in ubiquitin) linkage. Residues S30 and S37 each carry the phosphoserine modification. Glycyl lysine isopeptide (Lys-Gly) (interchain with G-Cter in ubiquitin) cross-links involve residues K53 and K60. A disordered region spans residues H58–R85. The span at S59–Q68 shows a compositional bias: basic residues. S91 bears the Phosphoserine mark. Residues K146 and K186 each participate in a glycyl lysine isopeptide (Lys-Gly) (interchain with G-Cter in ubiquitin) cross-link. The interval L164 to A189 is disordered.

Belongs to the eukaryotic ribosomal protein eL19 family. In terms of assembly, component of the large ribosomal subunit (LSU). Mature yeast ribosomes consist of a small (40S) and a large (60S) subunit. The 40S small subunit contains 1 molecule of ribosomal RNA (18S rRNA) and 33 different proteins (encoded by 57 genes). The large 60S subunit contains 3 rRNA molecules (25S, 5.8S and 5S rRNA) and 46 different proteins (encoded by 81 genes). eL19 lies in close proximity to the binding site for eukaryotic initiation factor eIF4G.

The protein resides in the cytoplasm. Component of the ribosome, a large ribonucleoprotein complex responsible for the synthesis of proteins in the cell. The small ribosomal subunit (SSU) binds messenger RNAs (mRNAs) and translates the encoded message by selecting cognate aminoacyl-transfer RNA (tRNA) molecules. The large subunit (LSU) contains the ribosomal catalytic site termed the peptidyl transferase center (PTC), which catalyzes the formation of peptide bonds, thereby polymerizing the amino acids delivered by tRNAs into a polypeptide chain. The nascent polypeptides leave the ribosome through a tunnel in the LSU and interact with protein factors that function in enzymatic processing, targeting, and the membrane insertion of nascent chains at the exit of the ribosomal tunnel. eL19 may play a role in the last stages of translation initiation, in particular subunit joining and shedding/releasing factors. The polypeptide is Large ribosomal subunit protein eL19A (Saccharomyces cerevisiae (strain ATCC 204508 / S288c) (Baker's yeast)).